The sequence spans 492 residues: Catalase isozyme 1 (492 aa).

Catalysis depends on residues H65 and N138. Residue Y348 participates in heme binding.

Belongs to the catalase family. In terms of assembly, homotetramer. Heme serves as cofactor.

Its subcellular location is the peroxisome. It carries out the reaction 2 H2O2 = O2 + 2 H2O. Occurs in almost all aerobically respiring organisms and serves to protect cells from the toxic effects of hydrogen peroxide. In Solanum lycopersicum (Tomato), this protein is Catalase isozyme 1 (CAT1).